Reading from the N-terminus, the 108-residue chain is Type III secretion system chaperone SseA (108 aa).

Residues 69–97 adopt a coiled-coil conformation; it reads NQEAEKDLKKIVSLFKQLEVRLKQLNAQA.

Binds to SseB and SseD.

It localises to the cytoplasm. In terms of biological role, functions as a type III secretion system (T3SS) chaperone, which is required for SseB and SseD accumulation and secretion. May have a direct role in secretion of SseB and SseD, or may facilitate their correct folding, for efficient secretion and function. Required for survival and replication within epithelial cells and macrophages. The polypeptide is Type III secretion system chaperone SseA (sseA) (Salmonella typhimurium (strain LT2 / SGSC1412 / ATCC 700720)).